Reading from the N-terminus, the 357-residue chain is Heat-inducible transcription repressor HrcA (357 aa).

It belongs to the HrcA family.

Its function is as follows. Negative regulator of class I heat shock genes (grpE-dnaK-dnaJ and groELS operons). Prevents heat-shock induction of these operons. In Chlorobium limicola (strain DSM 245 / NBRC 103803 / 6330), this protein is Heat-inducible transcription repressor HrcA.